The chain runs to 353 residues: Protein RecA (353 aa).

65–72 (GPESSGKT) contributes to the ATP binding site. The segment covering 334–345 (DAERAGAEREDN) has biased composition (basic and acidic residues). The tract at residues 334 to 353 (DAERAGAEREDNAAADDENF) is disordered.

It belongs to the RecA family.

It localises to the cytoplasm. Its function is as follows. Can catalyze the hydrolysis of ATP in the presence of single-stranded DNA, the ATP-dependent uptake of single-stranded DNA by duplex DNA, and the ATP-dependent hybridization of homologous single-stranded DNAs. It interacts with LexA causing its activation and leading to its autocatalytic cleavage. This is Protein RecA from Edwardsiella ictaluri (strain 93-146).